A 454-amino-acid polypeptide reads, in one-letter code: tRNA modification GTPase MnmE (454 aa).

Arginine 23, glutamate 80, and lysine 120 together coordinate (6S)-5-formyl-5,6,7,8-tetrahydrofolate. Residues 216 to 377 enclose the TrmE-type G domain; the sequence is GMKVVIAGRP…LREHLKQSMG (162 aa). Asparagine 226 is a K(+) binding site. GTP is bound by residues 226-231, 245-251, and 270-273; these read NAGKSS, TDIAGTT, and DTAG. Serine 230 is a Mg(2+) binding site. 3 residues coordinate K(+): threonine 245, isoleucine 247, and threonine 250. Threonine 251 contacts Mg(2+). Lysine 454 is a (6S)-5-formyl-5,6,7,8-tetrahydrofolate binding site.

Belongs to the TRAFAC class TrmE-Era-EngA-EngB-Septin-like GTPase superfamily. TrmE GTPase family. Homodimer. Heterotetramer of two MnmE and two MnmG subunits. The cofactor is K(+).

Its subcellular location is the cytoplasm. Exhibits a very high intrinsic GTPase hydrolysis rate. Involved in the addition of a carboxymethylaminomethyl (cmnm) group at the wobble position (U34) of certain tRNAs, forming tRNA-cmnm(5)s(2)U34. This is tRNA modification GTPase MnmE from Mannheimia succiniciproducens (strain KCTC 0769BP / MBEL55E).